A 491-amino-acid polypeptide reads, in one-letter code: MNFVVPDFYPATAEIFVAVMALVIMLATTFARSVARGLAYGLTLVTLIGAAIITYNTANPRAVTTFSNMFIGDLLGDVLKLLIYFSMAVALLYGRSYLADRKLDKPEYYVLALLMTLGMMVMVTSNHLLSMYIGLELMSLSLYALVAFDRDSARGTEAAMKYFVLGALASGLLLYGMSMLYGATGTLEISGIAKSVYNQAANDTVLLFGLVFLMAGICFKLGVVPFHMWIPDVYHGANTAVTLIIATAPKLAAFAMAVRLLVWGLFDVAEHWQTMLMFVAVLSIVLGNLAAIAQTNLKRMLAYSGISHMGFMLLGLLSGVVDGDPHYALDAYSAAMFYAISYVIMSLASFGMIILLSRAGFEAENIDDFKGLNKRSPWFAAMMMFVMFSMAGIPFFIGFFAKLAVLQAVVAAGYIWVAVVAVLMSVIGAFYYLRLVKVMYFDEPADATPIQAPAELRVFLSANGLAIAAIGLAPQGVMTLCTFVLLASTQP.

The next 14 helical transmembrane spans lie at 11–31, 38–58, 74–94, 106–126, 128–148, 163–183, 206–226, 243–263, 272–292, 301–321, 336–356, 379–399, 410–430, and 465–485; these read ATAE…TTFA, LAYG…YNTA, LLGD…LLYG, PEYY…VTSN, LLSM…LVAF, FVLG…LYGA, LLFG…VVPF, LIIA…LLVW, WQTM…LAAI, LAYS…SGVV, MFYA…IILL, FAAM…FIGF, VAAG…IGAF, and LAIA…TFVL.

This sequence belongs to the complex I subunit 2 family. As to quaternary structure, NDH-1 is composed of 14 different subunits. Subunits NuoA, H, J, K, L, M, N constitute the membrane sector of the complex.

It is found in the cell inner membrane. The catalysed reaction is a quinone + NADH + 5 H(+)(in) = a quinol + NAD(+) + 4 H(+)(out). Its function is as follows. NDH-1 shuttles electrons from NADH, via FMN and iron-sulfur (Fe-S) centers, to quinones in the respiratory chain. The immediate electron acceptor for the enzyme in this species is believed to be ubiquinone. Couples the redox reaction to proton translocation (for every two electrons transferred, four hydrogen ions are translocated across the cytoplasmic membrane), and thus conserves the redox energy in a proton gradient. The sequence is that of NADH-quinone oxidoreductase subunit N from Azoarcus sp. (strain BH72).